Consider the following 519-residue polypeptide: PTS system mannitol-specific EIICB component (519 aa).

At 1–30 (MAQTETQEKKGLGRKVQAFGSFLSSMIMPN) the chain is on the cytoplasmic side. The region spanning 19-351 (FGSFLSSMIM…MKFTKEPKQD (333 aa)) is the PTS EIIC type-2 domain. Residues 31–52 (IGAFIAWGFIAAIFIDNGWYPN) traverse the membrane as a helical segment. Topologically, residues 53–56 (KELS) are extracellular. The helical transmembrane segment at 57–77 (QLAGPMITYLIPLLIAFSGGR) threads the bilayer. Over 78–141 (LIHDLRGGIV…QGFEMLFNNF (64 aa)) the chain is Cytoplasmic. The helical transmembrane segment at 142–163 (SAGILAFIMTILGFKLLAPIMQ) threads the bilayer. The Extracellular segment spans residues 164 to 172 (FIMHILSVA). A helical transmembrane segment spans residues 173–193 (VEFLVHLHLLPIVSIIVEPAK). Residues 194 to 280 (ILFLNNAINH…VLMRPLLFIA (87 aa)) are Cytoplasmic-facing. The chain crosses the membrane as a helical span at residues 281-300 (VILGGMTGVATYQATGFGFK). Over 301 to 320 (SPASPGSFIVYCLNAPKGEF) the chain is Extracellular. A helical membrane pass occupies residues 321 to 342 (LHMVLGVFLAALVSFVVAALIM). Topologically, residues 343–519 (KFTKEPKQDL…NNLKKDQDKA (177 aa)) are cytoplasmic. A disordered region spans residues 366–406 (KSSVSSKLTGATTGTGAAGVAANKANGEDQNEASSEDEEED). Residues 367 to 387 (SSVSSKLTGATTGTGAAGVAA) show a composition bias toward low complexity. The span at 394 to 406 (DQNEASSEDEEED) shows a compositional bias: acidic residues. The 95-residue stretch at 425 to 519 (DHVIFACDAG…NNLKKDQDKA (95 aa)) folds into the PTS EIIB type-2 domain. C431 acts as the Phosphocysteine intermediate; for EIIB activity in catalysis. C431 is subject to Phosphocysteine; by EIIA.

As to quaternary structure, homodimer.

The protein resides in the cell membrane. It carries out the reaction D-mannitol(out) + N(pros)-phospho-L-histidyl-[protein] = D-mannitol 1-phosphate(in) + L-histidyl-[protein]. In terms of biological role, the phosphoenolpyruvate-dependent sugar phosphotransferase system (sugar PTS), a major carbohydrate active transport system, catalyzes the phosphorylation of incoming sugar substrates concomitantly with their translocation across the cell membrane. The enzyme II CmtAB PTS system is involved in D-mannitol transport. This is PTS system mannitol-specific EIICB component (mtlA) from Staphylococcus haemolyticus (strain JCSC1435).